A 166-amino-acid polypeptide reads, in one-letter code: T-cell surface glycoprotein CD3 zeta chain (166 aa).

The first 21 residues, 1 to 21, serve as a signal peptide directing secretion; that stretch reads MKWTALVIVAVLQTQFPVTAA. The Extracellular segment spans residues 22–30; the sequence is QSFGLLDPK. The chain crosses the membrane as a helical span at residues 31 to 51; sequence LCYLLDGILFIYGVIVTALFL. The Cytoplasmic segment spans residues 52-166; that stretch reads RAKFSRSADA…ALHMQALPPR (115 aa). Ser-58 carries the post-translational modification Phosphoserine. ITAM domains are found at residues 61-89, 100-128, and 133-161; these read APAY…LDRR, PQRK…EIGM, and QRRR…LHMQ. Tyr-64, Tyr-72, Tyr-83, Tyr-111, Tyr-123, Tyr-144, and Tyr-155 each carry phosphotyrosine. Residues 126 to 156 form a disordered region; the sequence is IGMKSDNQRRRGKGHDGVYQGLSTATKDTYD.

The protein belongs to the CD3Z/FCER1G family. As to quaternary structure, the TCR-CD3 complex is composed of a CD3D/CD3E and a CD3G/CD3E heterodimers that preferentially associate with TCRalpha and TCRbeta, respectively, to form TCRalpha/CD3E/CD3G and TCRbeta/CD3G/CD3E trimers. In turn, the hexamer interacts with CD3Z homodimer to form the TCR-CD3 complex. Alternatively, TCRalpha and TCRbeta can be replaced by TCRgamma and TCRdelta. Interacts with SLA. Interacts with TRAT1. Interacts with DOCK2. Interacts with SLA2. Interacts with SHB. Interacts with ZAP70. Interacts (tyrosine phosphorylated) with SHC1 (via SH2 domain). Interacts with PTPRC. Interacts with CRK; this interaction regulates CD3Z phosphorylation. Interacts (on T cell side) with CD81, ICAM1 and CD9 at immunological synapses between antigen-presenting cells and T cells. Interacts with CD160. Interacts with LY6E. Interacts with LY6E. The signaling subunit of immunoglobulin gamma (IgG) Fc receptor complex. As a homodimer or a heterodimer with FCER1G, associates with the ligand binding subunit FCGR3A (via transmembrane domain); this interaction is a prerequisite for Fc receptor complex expression on the cell surface. Interacts with CD5. Post-translationally, phosphorylated on Tyr residues after T-cell receptor triggering by LCK in association with CD4/CD8.

It is found in the cell membrane. Its function is as follows. Part of the TCR-CD3 complex present on T-lymphocyte cell surface that plays an essential role in adaptive immune response. When antigen presenting cells (APCs) activate T-cell receptor (TCR), TCR-mediated signals are transmitted across the cell membrane by the CD3 chains CD3D, CD3E, CD3G and CD3Z. All CD3 chains contain immunoreceptor tyrosine-based activation motifs (ITAMs) in their cytoplasmic domain. Upon TCR engagement, these motifs become phosphorylated by Src family protein tyrosine kinases LCK and FYN, resulting in the activation of downstream signaling pathways. CD3Z ITAMs phosphorylation creates multiple docking sites for the protein kinase ZAP70 leading to ZAP70 phosphorylation and its conversion into a catalytically active enzyme. Plays an important role in intrathymic T-cell differentiation. Additionally, participates in the activity-dependent synapse formation of retinal ganglion cells (RGCs) in both the retina and dorsal lateral geniculate nucleus (dLGN). In Ovis aries (Sheep), this protein is T-cell surface glycoprotein CD3 zeta chain (CD247).